An 859-amino-acid polypeptide reads, in one-letter code: Cadherin-related family member 1 (859 aa).

The signal sequence occupies residues 1 to 19; it reads MRRCRWAALALGLLRLCLA. The Extracellular portion of the chain corresponds to 20–700; sequence QANFAPHFFD…LIQTKDNPMK (681 aa). Cadherin domains follow at residues 36-135, 136-246, 247-353, 359-472, 473-576, and 573-688; these read NGNM…APRF, IQEP…APVF, VGTP…PPTF, PQNR…VPKF, DSLY…PPQF, and PPQF…SPMA. Residues N58 and N89 are each glycosylated (N-linked (GlcNAc...) asparagine). A glycan (N-linked (GlcNAc...) asparagine) is linked at N296. A helical transmembrane segment spans residues 701–721; the sequence is AVGVLAGTMATVVAITVLIST. The Cytoplasmic portion of the chain corresponds to 722 to 859; sequence ATFWRNKKSN…KKSVHNKAYF (138 aa). The interval 770–838 is disordered; sequence KEKPPNENCN…PKTMGSPVQS (69 aa). The segment covering 775-791 has biased composition (low complexity); that stretch reads NENCNNNSPESSLLPRA.

Interacts with PROM1. Undergoes proteolytic cleavage; produces a soluble 95 kDa N-terminal fragment and a 25 kDa cell-associated C-terminal fragment.

The protein localises to the cell membrane. In terms of biological role, potential calcium-dependent cell-adhesion protein. May be required for the structural integrity of the outer segment (OS) of photoreceptor cells. The sequence is that of Cadherin-related family member 1 from Homo sapiens (Human).